Here is an 881-residue protein sequence, read N- to C-terminus: Protein translocase subunit SecA (881 aa).

ATP contacts are provided by residues Gln83, 101–105 (GEGKT), and Asp492.

The protein belongs to the SecA family.

The protein localises to the plastid. The protein resides in the chloroplast stroma. Its subcellular location is the chloroplast thylakoid membrane. The enzyme catalyses ATP + H2O + cellular proteinSide 1 = ADP + phosphate + cellular proteinSide 2.. Its function is as follows. Has a central role in coupling the hydrolysis of ATP to the transfer of proteins across the thylakoid membrane. The protein is Protein translocase subunit SecA of Emiliania huxleyi (Coccolithophore).